Here is a 186-residue protein sequence, read N- to C-terminus: FMN-dependent NADH:quinone oxidoreductase 1 (186 aa).

Residues 15 to 17 and 81 to 84 each bind FMN; these read SVS and MYNF.

This sequence belongs to the azoreductase type 1 family. Homodimer. It depends on FMN as a cofactor.

The enzyme catalyses 2 a quinone + NADH + H(+) = 2 a 1,4-benzosemiquinone + NAD(+). It carries out the reaction N,N-dimethyl-1,4-phenylenediamine + anthranilate + 2 NAD(+) = 2-(4-dimethylaminophenyl)diazenylbenzoate + 2 NADH + 2 H(+). In terms of biological role, quinone reductase that provides resistance to thiol-specific stress caused by electrophilic quinones. Functionally, also exhibits azoreductase activity. Catalyzes the reductive cleavage of the azo bond in aromatic azo compounds to the corresponding amines. The chain is FMN-dependent NADH:quinone oxidoreductase 1 from Idiomarina loihiensis (strain ATCC BAA-735 / DSM 15497 / L2-TR).